The sequence spans 514 residues: MTEPNRAQAKPAAADTPAVDENKIIAERREKLAALRQQGVPFPNDFRPTHQAAALQAQYTETEQATLEAAPVEVAIAGRMMLKRVMGKASFATVQDGSGQIQFYITRDKVGEEVYAAFKHWDLGDIISARGELFRTNKGELSVQVRELRLLSKSLRPLPDKFHGLADQEMKYRQRYVDLIVSPETRNTFRARTNAISSLRRHMADAGFMEVETPMLHPIPGGAAAKPFITHHNALDMQMFMRIAPELYLKRLIVGGFERVFEINRNFRNEGVSPRHNPEFTMMEFYAAYTDYRWLMDFTEDLIRKAAIDARGSAVLTYQDRELDLSKPFHRLTICQAIQKFAPQYTDAQLADAGFLRTELKKFGVNTNAPQFLNAGLGTLQLVLFEETAENQLWEPTFIVDYPVEVSPLARASDTVPGITERFELFITGREIANGFSELNDAEDQADRFRKQVEQKDAGDEEAMYFDADYIRALEYGMPPTGGCGIGIDRLVMLLTDSPNIRDVILFPHLRRED.

Residues E424 and E431 each coordinate Mg(2+).

This sequence belongs to the class-II aminoacyl-tRNA synthetase family. In terms of assembly, homodimer. The cofactor is Mg(2+).

Its subcellular location is the cytoplasm. The enzyme catalyses tRNA(Lys) + L-lysine + ATP = L-lysyl-tRNA(Lys) + AMP + diphosphate. The polypeptide is Lysine--tRNA ligase (Cupriavidus necator (strain ATCC 17699 / DSM 428 / KCTC 22496 / NCIMB 10442 / H16 / Stanier 337) (Ralstonia eutropha)).